A 1293-amino-acid polypeptide reads, in one-letter code: DNA-directed RNA polymerase subunit beta' (1293 aa).

Residues Cys60, Cys62, Cys75, and Cys78 each contribute to the Zn(2+) site. 3 residues coordinate Mg(2+): Asp535, Asp537, and Asp539. 4 residues coordinate Zn(2+): Cys877, Cys953, Cys960, and Cys963.

This sequence belongs to the RNA polymerase beta' chain family. As to quaternary structure, the RNAP catalytic core consists of 2 alpha, 1 beta, 1 beta' and 1 omega subunit. When a sigma factor is associated with the core the holoenzyme is formed, which can initiate transcription. Requires Mg(2+) as cofactor. It depends on Zn(2+) as a cofactor.

The enzyme catalyses RNA(n) + a ribonucleoside 5'-triphosphate = RNA(n+1) + diphosphate. DNA-dependent RNA polymerase catalyzes the transcription of DNA into RNA using the four ribonucleoside triphosphates as substrates. The sequence is that of DNA-directed RNA polymerase subunit beta' from Kineococcus radiotolerans (strain ATCC BAA-149 / DSM 14245 / SRS30216).